A 200-amino-acid polypeptide reads, in one-letter code: Rho-related protein racD (200 aa).

7 residues coordinate GTP: A20, G22, K23, T24, C25, Y39, and T42. T24 contributes to the Mg(2+) binding site. 2 consecutive short sequence motifs (switch) follow at residues 33 to 44 and 64 to 82; these read NEFPKDYVPTVF and DTAGQEDYEQLRPLSYPNT. T42 serves as a coordination point for Mg(2+). Positions 123, 125, and 166 each coordinate GTP. C197 is subject to Cysteine methyl ester. C197 carries S-geranylgeranyl cysteine lipidation. A propeptide spans 198 to 200 (removed in mature form); the sequence is ALL.

This sequence belongs to the small GTPase superfamily. Rho family. The cofactor is Mg(2+).

The protein resides in the cell membrane. It is found in the cytoplasm. Its subcellular location is the cytoskeleton. The enzyme catalyses GTP + H2O = GDP + phosphate + H(+). Its activity is regulated as follows. Regulated by guanine nucleotide exchange factors (GEFs) which promote the exchange of bound GDP for free GTP, GTPase activating proteins (GAPs) which increase the GTP hydrolysis activity, and GDP dissociation inhibitors which inhibit the dissociation of the nucleotide from the GTPase. Small GTPase which cycles between active GTP-bound and inactive GDP-bound states. In Entamoeba histolytica (strain ATCC 30459 / HM-1:IMSS / ABRM), this protein is Rho-related protein racD.